A 1247-amino-acid polypeptide reads, in one-letter code: Respiratory nitrate reductase 1 alpha chain (1247 aa).

A 4Fe-4S Mo/W bis-MGD-type domain is found at 43–107 (DKIVRSTHGV…SYSWYLYSAN (65 aa)). [4Fe-4S] cluster-binding residues include His-50, Cys-54, Cys-58, and Cys-93. Asp-223 contacts Mo-bis(molybdopterin guanine dinucleotide).

This sequence belongs to the prokaryotic molybdopterin-containing oxidoreductase family. In terms of assembly, dimer of heterotrimers each composed of an alpha, a beta and a gamma chain. Alpha and beta are catalytic chains; gamma chains are involved in binding the enzyme complex to the cytoplasmic membrane. Interacts with the NarJ chaperone. [4Fe-4S] cluster is required as a cofactor. Mo-bis(molybdopterin guanine dinucleotide) serves as cofactor.

It is found in the cell membrane. It carries out the reaction nitrate + a quinol = a quinone + nitrite + H2O. In terms of biological role, the nitrate reductase enzyme complex allows E.coli to use nitrate as an electron acceptor during anaerobic growth. The alpha chain is the actual site of nitrate reduction. The protein is Respiratory nitrate reductase 1 alpha chain (narG) of Escherichia coli (strain K12).